We begin with the raw amino-acid sequence, 178 residues long: UPF0302 protein BcerKBAB4_1445 (178 aa).

The protein belongs to the UPF0302 family.

This chain is UPF0302 protein BcerKBAB4_1445, found in Bacillus mycoides (strain KBAB4) (Bacillus weihenstephanensis).